A 147-amino-acid polypeptide reads, in one-letter code: Ribonuclease 4 (147 aa).

A signal peptide spans 1-28 (MALQRTHSLLLLLLLTLLGLGLVQPSYG). Q29 carries the pyrrolidone carboxylic acid modification. Residues R35, H40, K68, N71, and T72 each coordinate dUMP. The active-site Proton acceptor is the H40. 4 disulfides stabilise this stretch: C53–C109, C67–C120, C85–C135, and C92–C99. H144 functions as the Proton donor in the catalytic mechanism. F145 serves as a coordination point for dUMP.

This sequence belongs to the pancreatic ribonuclease family. As to expression, expressed in the cortical and medullary tubules of the kidney, and in the transitional epithelium of the urinary bladder (at protein level).

It localises to the secreted. Its function is as follows. Cleaves preferentially after uridine bases. Has antimicrobial activity against uropathogenic E.coli (UPEC). Probably contributes to urinary tract sterility. The sequence is that of Ribonuclease 4 (RNASE4) from Homo sapiens (Human).